The primary structure comprises 458 residues: Maturase-like protein 1 (458 aa).

To group II intron maturases.

Its subcellular location is the plastid. The protein localises to the chloroplast. Could be required for group III intron excision. The polypeptide is Maturase-like protein 1 (mat1) (Euglena gracilis).